The chain runs to 132 residues: Ribonuclease P protein component 2 (132 aa).

It belongs to the eukaryotic/archaeal RNase P protein component 2 family. Consists of a catalytic RNA component and at least 4-5 protein subunits.

The protein localises to the cytoplasm. The enzyme catalyses Endonucleolytic cleavage of RNA, removing 5'-extranucleotides from tRNA precursor.. Functionally, part of ribonuclease P, a protein complex that generates mature tRNA molecules by cleaving their 5'-ends. This is Ribonuclease P protein component 2 from Methanosarcina acetivorans (strain ATCC 35395 / DSM 2834 / JCM 12185 / C2A).